The primary structure comprises 661 residues: tRNA uridine 5-carboxymethylaminomethyl modification enzyme MnmG (661 aa).

13-18 (GGGHAG) provides a ligand contact to FAD. Residue 285–299 (GPRYCPSVEDKINRF) participates in NAD(+) binding.

It belongs to the MnmG family. Homodimer. Heterotetramer of two MnmE and two MnmG subunits. It depends on FAD as a cofactor.

It localises to the cytoplasm. NAD-binding protein involved in the addition of a carboxymethylaminomethyl (cmnm) group at the wobble position (U34) of certain tRNAs, forming tRNA-cmnm(5)s(2)U34. This Acidovorax sp. (strain JS42) protein is tRNA uridine 5-carboxymethylaminomethyl modification enzyme MnmG.